The chain runs to 270 residues: Cell division protein DivIB (270 aa).

At M1 to R38 the chain is on the cytoplasmic side. The helical transmembrane segment at L39–D59 threads the bilayer. Residues K60 to S270 are Extracellular-facing. Residues S64–A135 enclose the POTRA domain.

It belongs to the FtsQ/DivIB family. DivIB subfamily.

It localises to the cell membrane. Functionally, cell division protein that may be involved in stabilizing or promoting the assembly of the division complex. In Erysipelothrix rhusiopathiae (strain Fujisawa), this protein is Cell division protein DivIB.